The chain runs to 122 residues: Crustacean hyperglycemic hormones 7 (122 aa).

The first 26 residues, 1–26, serve as a signal peptide directing secretion; it reads MSLAMTAFRMMAVALVVVVASSTTWA. Intrachain disulfides connect Cys55-Cys91, Cys71-Cys87, and Cys74-Cys100. Val120 bears the Valine amide mark.

It belongs to the arthropod CHH/MIH/GIH/VIH hormone family. As to expression, produced by the medulla terminalis X-organ in the eyestalks and transported to the sinus gland where they are stored and released.

Its subcellular location is the secreted. In terms of biological role, hormone found in the sinus gland of isopods and decapods which controls the blood sugar level. Has a secretagogue action over the amylase released from the midgut gland. May act as a stress hormone and may be involved in the control of molting and reproduction. The chain is Crustacean hyperglycemic hormones 7 from Penaeus japonicus (Kuruma prawn).